The following is a 368-amino-acid chain: GTPase Obg (368 aa).

An Obg domain is found at 1-159; sequence MQFIDQAEIE…RQLRLELKLL (159 aa). Residues 160–328 form the OBG-type G domain; it reads AEVGIIGLPN…LMQLVWQWLD (169 aa). GTP contacts are provided by residues 166–173, 191–195, 213–216, 280–283, and 309–311; these read GLPNAGKS, FTTLV, DIPG, NKID, and SAA. Positions 173 and 193 each coordinate Mg(2+).

The protein belongs to the TRAFAC class OBG-HflX-like GTPase superfamily. OBG GTPase family. Monomer. It depends on Mg(2+) as a cofactor.

The protein localises to the cytoplasm. In terms of biological role, an essential GTPase which binds GTP, GDP and possibly (p)ppGpp with moderate affinity, with high nucleotide exchange rates and a fairly low GTP hydrolysis rate. Plays a role in control of the cell cycle, stress response, ribosome biogenesis and in those bacteria that undergo differentiation, in morphogenesis control. The polypeptide is GTPase Obg (Synechocystis sp. (strain ATCC 27184 / PCC 6803 / Kazusa)).